We begin with the raw amino-acid sequence, 1010 residues long: Importin-8 (1010 aa).

One can recognise an Importin N-terminal domain in the interval 22-102; the sequence is AETELNQSYK…RDNIVEGIIR (81 aa). Positions 886–895 are enriched in basic and acidic residues; the sequence is NHSKAEKVDI. Residues 886–932 form a disordered region; it reads NHSKAEKVDIEENEEISSEEEEETSVSAQAMQSQIGRSEEEDDDDWD. A compositionally biased stretch (acidic residues) spans 896 to 909; that stretch reads EENEEISSEEEEET. A phosphoserine mark is found at S902 and S903. The segment covering 910 to 921 has biased composition (polar residues); the sequence is SVSAQAMQSQIG.

This sequence belongs to the importin beta family. Forms a heterodimer with KPNB1. Interacts with SRP19. Interacts with RPL23A. Binds directly to nuclear pore complexes. Interacts with LRPPRC; the interaction occurs when LRPPRC is in its RNA-free form and promotes import of LRPPRC to the nucleus to allow for EIF4E-mediated export of mRNAS from the nucleus to the cytoplasm.

It is found in the cytoplasm. The protein localises to the nucleus. In terms of biological role, involved in nuclear protein import, either by acting as autonomous nuclear transport receptor or as an adapter-like protein in association with the importin-beta subunit KPNB1. Acting autonomously, may serve as receptor for nuclear localization signals (NLS) and promote translocation of import substrates through the nuclear pore complex (NPC) by an energy requiring, Ran-dependent mechanism. At the nucleoplasmic side of the NPC, Ran binds to importin, the importin/substrate complex dissociates and importin is re-exported from the nucleus to the cytoplasm where GTP hydrolysis releases Ran. The directionality of nuclear import is thought to be conferred by an asymmetric distribution of the GTP- and GDP-bound forms of Ran between the cytoplasm and nucleus. In vitro mediates the nuclear import of the signal recognition particle protein SRP19. May also be involved in cytoplasm-to-nucleus shuttling of a broad spectrum of other cargos, including Argonaute-microRNAs complexes, the JUN protein, RELA/NF-kappa-B p65 subunit, the translation initiation factor EIF4E and a set of receptor-activated mothers against decapentaplegic homolog (SMAD) transcription factors that play a critical role downstream of the large family of transforming growth factor beta and bone morphogenetic protein (BMP) cytokines. In Mus musculus (Mouse), this protein is Importin-8.